A 537-amino-acid polypeptide reads, in one-letter code: Glucan 1,6-alpha-glucosidase (537 aa).

Residue aspartate 194 is the Nucleophile of the active site. Glutamate 236 acts as the Proton donor in catalysis.

Belongs to the glycosyl hydrolase 13 family.

The protein localises to the cytoplasm. The enzyme catalyses Hydrolysis of (1-&gt;6)-alpha-D-glucosidic linkages in (1-&gt;6)-alpha-D-glucans and derived oligosaccharides.. In terms of biological role, the physiological substrates may be short isomaltosaccharides. The protein is Glucan 1,6-alpha-glucosidase (dexB) of Streptococcus dysgalactiae subsp. equisimilis (Streptococcus equisimilis).